We begin with the raw amino-acid sequence, 156 residues long: Small ribosomal subunit protein uS7 (156 aa).

The protein belongs to the universal ribosomal protein uS7 family. As to quaternary structure, part of the 30S ribosomal subunit. Contacts proteins S9 and S11.

Functionally, one of the primary rRNA binding proteins, it binds directly to 16S rRNA where it nucleates assembly of the head domain of the 30S subunit. Is located at the subunit interface close to the decoding center, probably blocks exit of the E-site tRNA. This is Small ribosomal subunit protein uS7 from Thermoanaerobacter pseudethanolicus (strain ATCC 33223 / 39E) (Clostridium thermohydrosulfuricum).